Here is a 982-residue protein sequence, read N- to C-terminus: MVFLKRFRAYGFKSYADEITINFTHSMTGIVGPNGSGKSNVVDALKWVLGERSMKHLRSKSGDDMIFFGSKDKPASKLAEVELTFDNSQKLLHDPRPEISVMRRIYRGSGQSEYYINGELVTLKEISGIFADIGLEKGSLGIISQGSVSWFVEAKPEERRKIFEDASGIGRYTKRKEEVTNQLARTVQNLKQVSIVLNELKKDLKKLTIQADKAQRFVKLKEELKELELSVLVADYLKSQGELDRFNHQIGYIEQDFKLHEPQLQLLEDQLNIFNQRFRDADEQSIKLQQELQAVYQTINELEQRKAVIDVQLKNELSKKDEKHKIQALKKLIRVDQAQLESLQAQVLKTTSEITLLTNELSTVQTELDTTKLNLNQNSAALVYQQAQQEFLKAQNEEWVKTNPAHVLVKNVKALTGLLNTLNTFLKFEKQYEKALLKALGKSIGYLVVNNNLAALKAIDFLLTNQIGQVTFLPIDDIAFDTKIAPEHMEILQQLDGFLGVGSDHVSCDESLQPIVNALLGQVIIASDLQAALKLSSYTYKLYRVVTLNGETVYAGGIIQGGYVKDNLSLYNLQEKLASSEANITQLEHNEKQLRTNLTSLETKLNELNKKLKYEEILLEKFNERVNHTNKAILSYKIEYEQLTNESFDGTPHSFDETRLVESLNRAWAERDELNSQLKLNQELKETLAKSIKLAEAKTADLRALLDEQRSQLVLAREGKIRFENTIHNITDKINGGYKLTMEFAIANYNKPIKLSTMQAQNKIARMQSQLDEMGPINLESIAEIADKQKRFDDINGEYESLQTAIKDLQTAIGEIDELACKEFDELIQKVNAELPKTFNYLFGGGSCQIRYTDTDNVLLSGIEVFANPPGKNVANLMLLSGGEKTLVALSVLFSILRVSAFPLVILDEAESALDPANVERFANIIGNSSNNTQFLIITHRQGTMMKCDMLLGAAMQTKGVTKTFAVSLEKAEQYISKDKQN.

An ATP-binding site is contributed by 33–40 (PNGSGKSN). Coiled coils occupy residues 171 to 235 (RYTK…LVAD) and 263 to 377 (QLQL…NLNQ). The region spanning 416–535 (TGLLNTLNTF…ASDLQAALKL (120 aa)) is the SMC hinge domain. 3 coiled-coil regions span residues 568–627 (LSLY…ERVN), 669–713 (AERD…RSQL), and 753–818 (IKLS…EIDE).

Belongs to the SMC family. Homodimer.

The protein resides in the cytoplasm. Its function is as follows. Required for chromosome condensation and partitioning. The chain is Chromosome partition protein Smc from Mycoplasma pneumoniae (strain ATCC 29342 / M129 / Subtype 1) (Mycoplasmoides pneumoniae).